The following is a 117-amino-acid chain: Prefoldin subunit beta (117 aa).

Belongs to the prefoldin subunit beta family. As to quaternary structure, heterohexamer of two alpha and four beta subunits.

The protein resides in the cytoplasm. Molecular chaperone capable of stabilizing a range of proteins. Seems to fulfill an ATP-independent, HSP70-like function in archaeal de novo protein folding. The sequence is that of Prefoldin subunit beta from Thermococcus gammatolerans (strain DSM 15229 / JCM 11827 / EJ3).